The sequence spans 356 residues: uncharacterized protein (356 aa).

The tract at residues Glu25 to Asn72 is disordered. Residues Asn31–Ser50 show a composition bias toward basic and acidic residues. Residues Asp51–Phe70 show a composition bias toward acidic residues. Residues Glu328–Asn356 are a coiled coil.

The protein belongs to the mimivirus L17/R827 family.

This is an uncharacterized protein from Acanthamoeba polyphaga mimivirus (APMV).